The following is a 60-amino-acid chain: uncharacterized protein (60 aa).

Residues 27-50 (VKNNNNNNNNNNNNNNNNNNNNNK) form a disordered region. The span at 29-49 (NNNNNNNNNNNNNNNNNNNNN) shows a compositional bias: low complexity.

This is an uncharacterized protein from Dictyostelium discoideum (Social amoeba).